Reading from the N-terminus, the 207-residue chain is dTTP/UTP pyrophosphatase (207 aa).

Asp-79 functions as the Proton acceptor in the catalytic mechanism.

This sequence belongs to the Maf family. YhdE subfamily. A divalent metal cation serves as cofactor.

It localises to the cytoplasm. It catalyses the reaction dTTP + H2O = dTMP + diphosphate + H(+). It carries out the reaction UTP + H2O = UMP + diphosphate + H(+). In terms of biological role, nucleoside triphosphate pyrophosphatase that hydrolyzes dTTP and UTP. May have a dual role in cell division arrest and in preventing the incorporation of modified nucleotides into cellular nucleic acids. This chain is dTTP/UTP pyrophosphatase, found in Rhodopseudomonas palustris (strain BisB5).